The primary structure comprises 475 residues: Aspartyl/glutamyl-tRNA(Asn/Gln) amidotransferase subunit B (475 aa).

This sequence belongs to the GatB/GatE family. GatB subfamily. Heterotrimer of A, B and C subunits.

The enzyme catalyses L-glutamyl-tRNA(Gln) + L-glutamine + ATP + H2O = L-glutaminyl-tRNA(Gln) + L-glutamate + ADP + phosphate + H(+). It catalyses the reaction L-aspartyl-tRNA(Asn) + L-glutamine + ATP + H2O = L-asparaginyl-tRNA(Asn) + L-glutamate + ADP + phosphate + 2 H(+). Allows the formation of correctly charged Asn-tRNA(Asn) or Gln-tRNA(Gln) through the transamidation of misacylated Asp-tRNA(Asn) or Glu-tRNA(Gln) in organisms which lack either or both of asparaginyl-tRNA or glutaminyl-tRNA synthetases. The reaction takes place in the presence of glutamine and ATP through an activated phospho-Asp-tRNA(Asn) or phospho-Glu-tRNA(Gln). This chain is Aspartyl/glutamyl-tRNA(Asn/Gln) amidotransferase subunit B, found in Thermoanaerobacter pseudethanolicus (strain ATCC 33223 / 39E) (Clostridium thermohydrosulfuricum).